The primary structure comprises 143 residues: Large ribosomal subunit protein uL11 (143 aa).

This sequence belongs to the universal ribosomal protein uL11 family. In terms of assembly, part of the ribosomal stalk of the 50S ribosomal subunit. Interacts with L10 and the large rRNA to form the base of the stalk. L10 forms an elongated spine to which L12 dimers bind in a sequential fashion forming a multimeric L10(L12)X complex. In terms of processing, one or more lysine residues are methylated.

Its function is as follows. Forms part of the ribosomal stalk which helps the ribosome interact with GTP-bound translation factors. The sequence is that of Large ribosomal subunit protein uL11 from Bifidobacterium adolescentis (strain ATCC 15703 / DSM 20083 / NCTC 11814 / E194a).